The following is a 417-amino-acid chain: Squalene synthase (417 aa).

Arginine 52 and arginine 77 together coordinate NADP(+). Mg(2+) is bound by residues aspartate 80, glutamate 83, and aspartate 84. Arginine 218 serves as a coordination point for NADP(+). The helical transmembrane segment at 284–304 threads the bilayer; it reads SVFNFCAIPQVMAIATLAACY. 2 residues coordinate NADP(+): lysine 315 and arginine 317. A helical membrane pass occupies residues 384–404; that stretch reads PIYLSFVMLLAALSWQYLTTL.

This sequence belongs to the phytoene/squalene synthase family. Requires Mg(2+) as cofactor. As to expression, widely expressed.

Its subcellular location is the endoplasmic reticulum membrane. It carries out the reaction 2 (2E,6E)-farnesyl diphosphate + NADPH + H(+) = squalene + 2 diphosphate + NADP(+). The catalysed reaction is 2 (2E,6E)-farnesyl diphosphate + NADH + H(+) = squalene + 2 diphosphate + NAD(+). It catalyses the reaction 2 (2E,6E)-farnesyl diphosphate = presqualene diphosphate + diphosphate. The enzyme catalyses presqualene diphosphate + NADH + H(+) = squalene + diphosphate + NAD(+). It carries out the reaction presqualene diphosphate + NADPH + H(+) = squalene + diphosphate + NADP(+). The protein operates within terpene metabolism; lanosterol biosynthesis; lanosterol from farnesyl diphosphate: step 1/3. Functionally, catalyzes the condensation of 2 farnesyl pyrophosphate (FPP) moieties to form squalene. Proceeds in two distinct steps. In the first half-reaction, two molecules of FPP react to form the stable presqualene diphosphate intermediate (PSQPP), with concomitant release of a proton and a molecule of inorganic diphosphate. In the second half-reaction, PSQPP undergoes heterolysis, isomerization, and reduction with NADPH or NADH to form squalene. It is the first committed enzyme of the sterol biosynthesis pathway. This Homo sapiens (Human) protein is Squalene synthase (FDFT1).